The following is a 367-amino-acid chain: Phospho-N-acetylmuramoyl-pentapeptide-transferase (367 aa).

The next 10 membrane-spanning stretches (helical) occupy residues 28–48, 75–95, 96–116, 134–154, 175–195, 206–226, 243–263, 271–291, 295–315, and 344–364; these read GALM…IGWL, TMGG…WADL, TNAY…IGFI, FKLV…THTA, LMIN…VGSG, GLAI…AYVV, AGEI…FLWW, FMGD…AVAI, LVLA…MVQV, and TIVI…LATL.

This sequence belongs to the glycosyltransferase 4 family. MraY subfamily. Requires Mg(2+) as cofactor.

It is found in the cell inner membrane. The enzyme catalyses UDP-N-acetyl-alpha-D-muramoyl-L-alanyl-gamma-D-glutamyl-meso-2,6-diaminopimeloyl-D-alanyl-D-alanine + di-trans,octa-cis-undecaprenyl phosphate = di-trans,octa-cis-undecaprenyl diphospho-N-acetyl-alpha-D-muramoyl-L-alanyl-D-glutamyl-meso-2,6-diaminopimeloyl-D-alanyl-D-alanine + UMP. It participates in cell wall biogenesis; peptidoglycan biosynthesis. Its function is as follows. Catalyzes the initial step of the lipid cycle reactions in the biosynthesis of the cell wall peptidoglycan: transfers peptidoglycan precursor phospho-MurNAc-pentapeptide from UDP-MurNAc-pentapeptide onto the lipid carrier undecaprenyl phosphate, yielding undecaprenyl-pyrophosphoryl-MurNAc-pentapeptide, known as lipid I. The sequence is that of Phospho-N-acetylmuramoyl-pentapeptide-transferase from Maricaulis maris (strain MCS10) (Caulobacter maris).